The following is a 46-amino-acid chain: Photosystem II reaction center protein K (46 aa).

Positions Met1–Ala9 are excised as a propeptide. The chain crosses the membrane as a helical span at residues Leu25 to Phe45.

This sequence belongs to the PsbK family. PSII is composed of 1 copy each of membrane proteins PsbA, PsbB, PsbC, PsbD, PsbE, PsbF, PsbH, PsbI, PsbJ, PsbK, PsbL, PsbM, PsbT, PsbX, PsbY, PsbZ, Psb30/Ycf12, at least 3 peripheral proteins of the oxygen-evolving complex and a large number of cofactors. It forms dimeric complexes.

It is found in the plastid. It localises to the chloroplast thylakoid membrane. Its function is as follows. One of the components of the core complex of photosystem II (PSII). PSII is a light-driven water:plastoquinone oxidoreductase that uses light energy to abstract electrons from H(2)O, generating O(2) and a proton gradient subsequently used for ATP formation. It consists of a core antenna complex that captures photons, and an electron transfer chain that converts photonic excitation into a charge separation. In Nephroselmis olivacea (Green alga), this protein is Photosystem II reaction center protein K.